A 31-amino-acid chain; its full sequence is Gamma-conotoxin-like As7a (31 aa).

3 disulfide bridges follow: cysteine 2-cysteine 16, cysteine 9-cysteine 20, and cysteine 15-cysteine 31. Glutamate 14 carries the post-translational modification 4-carboxyglutamate.

This sequence belongs to the conotoxin O1 superfamily. Expressed by the venom duct.

The protein resides in the secreted. Functionally, gamma-conotoxins may act on voltage-gated non-specific cation pacemaker channels (HCN). Elicits toxic effects in the freshwater snail Pomacea paludosa after intramuscular injection, but it has no effect when injected intracerebrally into mice. This chain is Gamma-conotoxin-like As7a, found in Conus cancellatus (Cancellate cone).